We begin with the raw amino-acid sequence, 349 residues long: Pseudouridylate synthase TRUB1 (349 aa).

At A2 the chain carries N-acetylalanine. Residue S11 is modified to Phosphoserine. The Nucleophile role is filled by D121.

This sequence belongs to the pseudouridine synthase TruB family. In terms of tissue distribution, highly expressed in heart, skeletal muscle and liver. Expressed at lower levels in lung, small intestine, kidney and spleen.

The protein resides in the nucleus. Its subcellular location is the cytoplasm. It is found in the cytosol. The enzyme catalyses a uridine in mRNA = a pseudouridine in mRNA. It catalyses the reaction a uridine in tRNA = a pseudouridine in tRNA. It carries out the reaction uridine(55) in tRNA = pseudouridine(55) in tRNA. Its function is as follows. Pseudouridine synthase that catalyzes pseudouridylation of mRNAs and tRNAs. Mediates pseudouridylation of mRNAs with the consensus sequence 5'-GUUCNANNC-3', harboring a stem-loop structure. Constitutes the major pseudouridine synthase acting on mRNAs. Also catalyzes pseudouridylation of some tRNAs, including synthesis of pseudouridine(55) from uracil-55, in the psi GC loop of a subset of tRNAs. Promotes the processing of pri-let-7 microRNAs (pri-miRNAs) independently of its RNA pseudouridylate synthase activity. Acts by binding to the stem-loop structure on pri-let-7, preventing LIN28-binding (LIN28A and/or LIN28B), thereby enhancing the interaction between pri-let-7 and the microprocessor DGCR8, which mediates miRNA maturation. The protein is Pseudouridylate synthase TRUB1 of Homo sapiens (Human).